The sequence spans 169 residues: Putative cysteine protease YraA (169 aa).

In terms of domain architecture, PfpI endopeptidase spans 3–169 (KKIAVLVTDQ…FNRESLNLLK (167 aa)). The active-site Nucleophile is cysteine 103. Histidine 104 is a catalytic residue.

Belongs to the peptidase C56 family.

Its function is as follows. Functions in the protection against aldehyde-stress, possibly by degrading damaged proteins. This is Putative cysteine protease YraA (yraA) from Bacillus subtilis (strain 168).